A 301-amino-acid chain; its full sequence is Small ribosomal subunit biogenesis GTPase RsgA (301 aa).

A CP-type G domain is found at 63–224 (INALVRPPIA…IADTPGFSSY (162 aa)). Residues 112–115 (SKAD) and 167–175 (GQTGAGKST) contribute to the GTP site. Zn(2+)-binding residues include Cys248, Cys253, His255, and Cys261.

The protein belongs to the TRAFAC class YlqF/YawG GTPase family. RsgA subfamily. In terms of assembly, monomer. Associates with 30S ribosomal subunit, binds 16S rRNA. It depends on Zn(2+) as a cofactor.

The protein resides in the cytoplasm. In terms of biological role, one of several proteins that assist in the late maturation steps of the functional core of the 30S ribosomal subunit. Helps release RbfA from mature subunits. May play a role in the assembly of ribosomal proteins into the subunit. Circularly permuted GTPase that catalyzes slow GTP hydrolysis, GTPase activity is stimulated by the 30S ribosomal subunit. This chain is Small ribosomal subunit biogenesis GTPase RsgA, found in Leuconostoc citreum (strain KM20).